A 183-amino-acid chain; its full sequence is MTKQPEDWLDDVPGDDIEDEDDEIIWVSKSEIKRDAEELKRLGAELVDLGKNALDKIPLDTDLRDAIELAQRIKMEGRRRQLQLIGKMLRQRDVEPIRQALDKLKNRHNQQVVLFHKLEHLRDRLIVEGDDAVAEVLTLWPHADRQQLRSLIRNAKKEKEGNKPPKSARQIFQYLRELAENEG.

This sequence belongs to the DarP family.

The protein resides in the cytoplasm. In terms of biological role, member of a network of 50S ribosomal subunit biogenesis factors which assembles along the 30S-50S interface, preventing incorrect 23S rRNA structures from forming. Promotes peptidyl transferase center (PTC) maturation. The sequence is that of Dual-action ribosomal maturation protein DarP from Salmonella paratyphi A (strain ATCC 9150 / SARB42).